Here is a 294-residue protein sequence, read N- to C-terminus: MSLFDWFADRRKGQFVGKVTQESEESDGLWEKCPECGQVVYRKDLIDNCSVCSNCGHHNRIDSKERIRIISDPNTFKSINNNLTPVDPLGFKDRRAYADRLRESQASTGLKDGVLTGTCEVNSIPMALAVMDFRFMGGSMGSVVGEKITRLIEHSTKEKLPLLIVCASGGARMQEGMLSLMQMAKISGALERHRDAQLLYMPLLTHPTTGGVTASFAMLGDLILAEPKALIGFAGRRVIEQTLREKLPDNFQTAEYLQDHGFVDTIVPRTELKETLAKILRLHKTQEVKLQTNA.

A CoA carboxyltransferase N-terminal domain is found at 29-294 (LWEKCPECGQ…TQEVKLQTNA (266 aa)). Positions 33, 36, 52, and 55 each coordinate Zn(2+). Residues 33-55 (CPECGQVVYRKDLIDNCSVCSNC) form a C4-type zinc finger.

This sequence belongs to the AccD/PCCB family. In terms of assembly, acetyl-CoA carboxylase is a heterohexamer composed of biotin carboxyl carrier protein (AccB), biotin carboxylase (AccC) and two subunits each of ACCase subunit alpha (AccA) and ACCase subunit beta (AccD). Zn(2+) is required as a cofactor.

It is found in the cytoplasm. It catalyses the reaction N(6)-carboxybiotinyl-L-lysyl-[protein] + acetyl-CoA = N(6)-biotinyl-L-lysyl-[protein] + malonyl-CoA. Its pathway is lipid metabolism; malonyl-CoA biosynthesis; malonyl-CoA from acetyl-CoA: step 1/1. In terms of biological role, component of the acetyl coenzyme A carboxylase (ACC) complex. Biotin carboxylase (BC) catalyzes the carboxylation of biotin on its carrier protein (BCCP) and then the CO(2) group is transferred by the transcarboxylase to acetyl-CoA to form malonyl-CoA. The protein is Acetyl-coenzyme A carboxylase carboxyl transferase subunit beta of Prochlorococcus marinus (strain NATL1A).